Reading from the N-terminus, the 618-residue chain is Proline--tRNA ligase (618 aa).

This sequence belongs to the class-II aminoacyl-tRNA synthetase family. ProS type 1 subfamily. In terms of assembly, homodimer.

The protein resides in the cytoplasm. The catalysed reaction is tRNA(Pro) + L-proline + ATP = L-prolyl-tRNA(Pro) + AMP + diphosphate. Catalyzes the attachment of proline to tRNA(Pro) in a two-step reaction: proline is first activated by ATP to form Pro-AMP and then transferred to the acceptor end of tRNA(Pro). As ProRS can inadvertently accommodate and process non-cognate amino acids such as alanine and cysteine, to avoid such errors it has two additional distinct editing activities against alanine. One activity is designated as 'pretransfer' editing and involves the tRNA(Pro)-independent hydrolysis of activated Ala-AMP. The other activity is designated 'posttransfer' editing and involves deacylation of mischarged Ala-tRNA(Pro). The misacylated Cys-tRNA(Pro) is not edited by ProRS. The sequence is that of Proline--tRNA ligase from Streptococcus equi subsp. zooepidemicus (strain H70).